The sequence spans 333 residues: Oxidoreductase AN1596 (333 aa).

The protein belongs to the NmrA-type oxidoreductase family.

The protein operates within secondary metabolite biosynthesis; terpenoid biosynthesis. Oxidoreductase; part of the gene cluster that mediates the biosynthesis of the diterpene ent-pimara-8(14),15-diene (PD). Within the cluster, the HMG-CoA reductase AN1593 functions in the mevalonate pathway, which produces isoprenoid precursors. The geranylgeranyl pyrophosphate (GGPP) synthase AN1592 is needed in the formation of GGPP, the precursor for diterpenes. Lastly, the pimaradiene synthase pbcA performs the 2 cyclization steps that convert GGPP to ent-pimara-8(14),15-diene. The putative roles of the remaining cluster enzymes in ent-pimara-8(14),15-diene biosynthesis is unclear. The cytochrome P450 monooxygenase AN1598, the glutathione S-transferase AN1595, the oxidoreductases AN1596 and AN1597 probably function as decorative enzymes. It is possible that in biological conditions the compound is oxidized to ent-pimara-8(14),15-dien-19-oic acid, which is a bioactive diterpene compound predominant in many plant extracts. This is Oxidoreductase AN1596 from Emericella nidulans (strain FGSC A4 / ATCC 38163 / CBS 112.46 / NRRL 194 / M139) (Aspergillus nidulans).